A 134-amino-acid polypeptide reads, in one-letter code: MKSVFTLSASLAISLLLCCTAQANDHKILGVIAMPRNETNDLALKLPVCRIVKRIQLTADHGDLQLSGASVYFKAARSASQSLNIPSEIKEGQTTDWININSDNDNKRCVSKITFSGHTVNSSDMATLKIIGDD.

The first 23 residues, 1 to 23, serve as a signal peptide directing secretion; sequence MKSVFTLSASLAISLLLCCTAQA.

This sequence belongs to the UPF0412 family.

The polypeptide is UPF0412 protein YaaI (Escherichia coli (strain SMS-3-5 / SECEC)).